The primary structure comprises 327 residues: Protein MRG2 (327 aa).

The disordered stretch occupies residues 1–40; that stretch reads MGSPNAAAETDLTTDDFIGDTRRDSGSDTETNTDCDGEDL. One can recognise a Tudor-knot domain in the interval 52–101; the sequence is FEEGERVLAKHSDCFYEAKVLKVEFKDNEWKYFVHYIGWNKSWDEWIRLD. Residues 133 to 156 are disordered; the sequence is SKMKPRSPNVARGRKRKQDSVDTE. Positions 162–327 constitute an MRG domain; sequence SDNLLSFNIP…AVEEMEKKEG (166 aa).

In terms of assembly, interacts with HAM1 and HAM2. Interacts (via MRG domain) with CO. Component of the NuA4 histone acetyltransferase complex. As to expression, ubiquitous. Mainly expressed in the vasculature of cotyledons and leaves, and in roots and inflorescences.

It localises to the nucleus. Functionally, chromatin remodeling factor. Acts as a 'reader' protein by binding to H3K4me3 and H3K36me3 to control histone H4 acetylation. Increases the transcriptional levels of the flowering time genes FLC and FT. Binds the chromatin at the FT promoter upon interaction with CO. This chain is Protein MRG2, found in Arabidopsis thaliana (Mouse-ear cress).